We begin with the raw amino-acid sequence, 680 residues long: Epithelial splicing regulatory protein 1 (680 aa).

RRM domains are found at residues 224-301 (TVVR…KATG), 325-405 (VIVR…RSTA), and 444-524 (DCIR…QCSA). S542 is modified (phosphoserine). At R581 the chain carries Omega-N-methylarginine.

The protein belongs to the ESRP family. As to expression, epithelial cell-specific. Epithelial-specific expression in diverse tissues and organs with particularly notable levels of expression in skin and gastrointestinal epithelia.

The protein resides in the nucleus. Its function is as follows. mRNA splicing factor that regulates the formation of epithelial cell-specific isoforms. Specifically regulates the expression of FGFR2-IIIb, an epithelial cell-specific isoform of FGFR2. Also regulates the splicing of CD44, CTNND1, ENAH, 3 transcripts that undergo changes in splicing during the epithelial-to-mesenchymal transition (EMT). Acts by directly binding specific sequences in mRNAs. Binds the GU-rich sequence motifs in the ISE/ISS-3, a cis-element regulatory region present in the mRNA of FGFR2. Regulates splicing and expression of genes involved in inner ear development, auditory hair cell differentiation, and cell fate specification in the cochlear epithelium. The chain is Epithelial splicing regulatory protein 1 (Esrp1) from Mus musculus (Mouse).